A 94-amino-acid chain; its full sequence is Pyrimidine/purine nucleoside phosphorylase (94 aa).

This sequence belongs to the nucleoside phosphorylase PpnP family.

The catalysed reaction is a purine D-ribonucleoside + phosphate = a purine nucleobase + alpha-D-ribose 1-phosphate. It carries out the reaction adenosine + phosphate = alpha-D-ribose 1-phosphate + adenine. It catalyses the reaction cytidine + phosphate = cytosine + alpha-D-ribose 1-phosphate. The enzyme catalyses guanosine + phosphate = alpha-D-ribose 1-phosphate + guanine. The catalysed reaction is inosine + phosphate = alpha-D-ribose 1-phosphate + hypoxanthine. It carries out the reaction thymidine + phosphate = 2-deoxy-alpha-D-ribose 1-phosphate + thymine. It catalyses the reaction uridine + phosphate = alpha-D-ribose 1-phosphate + uracil. The enzyme catalyses xanthosine + phosphate = alpha-D-ribose 1-phosphate + xanthine. In terms of biological role, catalyzes the phosphorolysis of diverse nucleosides, yielding D-ribose 1-phosphate and the respective free bases. Can use uridine, adenosine, guanosine, cytidine, thymidine, inosine and xanthosine as substrates. Also catalyzes the reverse reactions. This chain is Pyrimidine/purine nucleoside phosphorylase, found in Pseudomonas putida (strain ATCC 700007 / DSM 6899 / JCM 31910 / BCRC 17059 / LMG 24140 / F1).